We begin with the raw amino-acid sequence, 728 residues long: Phosphoribosylformylglycinamidine synthase subunit PurL (728 aa).

H54 is an active-site residue. 2 residues coordinate ATP: Y57 and K96. E98 contributes to the Mg(2+) binding site. Residues 99–102 (SHNH) and R121 each bind substrate. H100 serves as the catalytic Proton acceptor. D122 provides a ligand contact to Mg(2+). Q245 contacts substrate. A Mg(2+)-binding site is contributed by D273. 317–319 (ETQ) provides a ligand contact to substrate. ATP contacts are provided by D495 and G532. N533 lines the Mg(2+) pocket. S535 lines the substrate pocket.

This sequence belongs to the FGAMS family. In terms of assembly, monomer. Part of the FGAM synthase complex composed of 1 PurL, 1 PurQ and 2 PurS subunits.

Its subcellular location is the cytoplasm. It catalyses the reaction N(2)-formyl-N(1)-(5-phospho-beta-D-ribosyl)glycinamide + L-glutamine + ATP + H2O = 2-formamido-N(1)-(5-O-phospho-beta-D-ribosyl)acetamidine + L-glutamate + ADP + phosphate + H(+). Its pathway is purine metabolism; IMP biosynthesis via de novo pathway; 5-amino-1-(5-phospho-D-ribosyl)imidazole from N(2)-formyl-N(1)-(5-phospho-D-ribosyl)glycinamide: step 1/2. Part of the phosphoribosylformylglycinamidine synthase complex involved in the purines biosynthetic pathway. Catalyzes the ATP-dependent conversion of formylglycinamide ribonucleotide (FGAR) and glutamine to yield formylglycinamidine ribonucleotide (FGAM) and glutamate. The FGAM synthase complex is composed of three subunits. PurQ produces an ammonia molecule by converting glutamine to glutamate. PurL transfers the ammonia molecule to FGAR to form FGAM in an ATP-dependent manner. PurS interacts with PurQ and PurL and is thought to assist in the transfer of the ammonia molecule from PurQ to PurL. This chain is Phosphoribosylformylglycinamidine synthase subunit PurL, found in Macrococcus caseolyticus (strain JCSC5402) (Macrococcoides caseolyticum).